The chain runs to 473 residues: Glycine receptor subunit beta-type 4 (473 aa).

The N-terminal stretch at 1–19 (MHSLFLKILIYSLMQCVLG) is a signal peptide. Topologically, residues 20 to 249 (QAEFWDYDEN…EFHVDREITH (230 aa)) are extracellular. Asn-29, Asn-105, and Asn-151 each carry an N-linked (GlcNAc...) asparagine glycan. Cys-166 and Cys-180 form a disulfide bridge. A helical transmembrane segment spans residues 250 to 271 (HIIQSYIPTSLIVIISWFSFWL). Topologically, residues 272-276 (DVEAV) are cytoplasmic. A helical membrane pass occupies residues 277–297 (PGRVSLSITTLLTLATQSSAA). Topologically, residues 298 to 308 (RMALPQASDVK) are extracellular. The helical transmembrane segment at 309-329 (AIDVWMGTCMAFVFSAMIEFT) threads the bilayer. Residues 330–439 (VVNYCVRRKV…NRKNAQKIDR (110 aa)) are Cytoplasmic-facing. The chain crosses the membrane as a helical span at residues 440 to 460 (YSRALFPLAFIIFNIFYWIYY). Topologically, residues 461 to 473 (LKYAGSNSPELLL) are extracellular.

It belongs to the ligand-gated ion channel (TC 1.A.9) family. Glycine receptor (TC 1.A.9.3) subfamily. Pentamer.

The protein resides in the postsynaptic cell membrane. The protein localises to the synapse. It localises to the cell membrane. In terms of biological role, glycine receptors are ligand-gated chloride channels. Channel opening is triggered by extracellular glycine. Contributes to the generation of inhibitory postsynaptic currents. The polypeptide is Glycine receptor subunit beta-type 4 (Caenorhabditis elegans).